A 560-amino-acid polypeptide reads, in one-letter code: Choline/ethanolamine transporter FLVCR1 (560 aa).

Residues 1-43 (MARPDDEVGPAVAPGHPLGKGYLPVPKGAPDGEARLVPQNGPE) are disordered. Residues 1–92 (MARPDDEVGP…EDVPCPACPP (92 aa)) lie on the Cytoplasmic side of the membrane. The chain crosses the membrane as a helical span at residues 93–117 (RTALSPRRFVVLLIFSLYSLVNAFQ). Residues 118–135 (WIQYSSISNVFEDFYEVS) are Extracellular-facing. The chain crosses the membrane as a helical span at residues 136 to 163 (PLHINWLSMVYMVAYVPLIFPATWLLDT). The Cytoplasmic segment spans residues 164–165 (RG). Residues 166-185 (LRLTALLGSGLNCLGAWVKC) form a helical membrane-spanning segment. The Extracellular segment spans residues 186–192 (GSVQRHL). Residues 193–221 (FWVTMLGQILCSVAQVFILGLPSPVASVW) form a helical membrane-spanning segment. Q207 is an ethanolamine binding site. The Cytoplasmic portion of the chain corresponds to 222 to 226 (FGPKE). Residues 227–252 (VSTACATAVLGNQLGTAVGFLLPPVL) form a helical membrane-spanning segment. Topologically, residues 253–270 (VPALGTQNNTGLLAHTQN) are extracellular. A glycan (N-linked (GlcNAc...) asparagine) is linked at N270. A helical transmembrane segment spans residues 271 to 300 (NTDLLAHNINTMFYGTAFISTFLFFLTVIA). At 301–336 (FKEKPPLPPSQAQAILRDSPPEEYSYKSSIWNLCRN) the chain is on the cytoplasmic side. Residues 337 to 367 (IPFVLLLVSYGIMTGAFYSISTLLNQIILTY) traverse the membrane as a helical segment. Residues 368–371 (YVGE) are Extracellular-facing. The helical transmembrane segment at 372 to 400 (EVNAGRIGLTLVVAGMVGSILCGLWLDYT) threads the bilayer. Topologically, residues 401 to 402 (KT) are cytoplasmic. Residues 403-425 (YKQTTLIVYVLSFIGMLIFTFTL) traverse the membrane as a helical segment. At 426 to 428 (NLG) the chain is on the extracellular side. A helical transmembrane segment spans residues 429–458 (YIVALFFTGGILGFFMTGYLPLGFEFAVEI). The Cytoplasmic segment spans residues 459-466 (TYPESEGM). The chain crosses the membrane as a helical span at residues 467-492 (SSGLLNTAAQILGIFFTLAQGKITTD). Residue Q476 participates in ethanolamine binding. Q476 contributes to the choline binding site. Topologically, residues 493 to 495 (YNS) are extracellular. The chain crosses the membrane as a helical span at residues 496–518 (PEAGNIFLCAWMFVGIILTALIK). Over 519–560 (SDLRRHNINTGLTNIDVKAVPVDSRVDPKPKAMVSIQSESSL) the chain is Cytoplasmic. At S542 the chain carries Phosphoserine.

The protein belongs to the major facilitator superfamily. Feline leukemia virus subgroup C receptor (TC 2.A.1.28.1) family.

Its subcellular location is the cell membrane. The enzyme catalyses choline(out) = choline(in). It carries out the reaction ethanolamine(in) = ethanolamine(out). It catalyses the reaction heme b(in) = heme b(out). Functionally, uniporter that mediates the transport of extracellular choline and ethanolamine into cells, thereby playing a key role in phospholipid biosynthesis. Choline and ethanolamine are the precursors of phosphatidylcholine and phosphatidylethanolamine, respectively, the two most abundant phospholipids. Transport is not coupled with proton transport and is exclusively driven by the choline (or ethanolamine) gradient across the plasma membrane. Also acts as a heme b transporter that mediates heme efflux from the cytoplasm to the extracellular compartment. In Mus terricolor (Earth-colored mouse), this protein is Choline/ethanolamine transporter FLVCR1 (Flvcr1).